The sequence spans 130 residues: Secreted RxLR effector protein 66 (130 aa).

Positions 1-21 (MHLRLLMSTVITATLIVSNNA) are cleaved as a signal peptide. A RxLR-dEER motif is present at residues 32-62 (RALRGASTVGIAADNLLAAHFSPTLKHKESR). A helical membrane pass occupies residues 104–124 (GPAIAIFAGVAATFILIDYLI).

Belongs to the RxLR effector family.

It localises to the secreted. The protein resides in the host cytoplasm. Its subcellular location is the host nucleus. The protein localises to the membrane. In terms of biological role, effector that acts as a broad suppressor of cell death to interrupt plant immunity. Inhibits cell death induced by cell death-inducing proteins, including the PAMP elicitor INF1 from P.infestans. This chain is Secreted RxLR effector protein 66, found in Plasmopara viticola (Downy mildew of grapevine).